A 155-amino-acid chain; its full sequence is Snaclec agkicetin-C subunit alpha (155 aa).

The N-terminal stretch at 1 to 23 (MGRFIFVSFGLLVVFLSLSGTAA) is a signal peptide. Cystine bridges form between Cys-25/Cys-36, Cys-53/Cys-149, and Cys-124/Cys-141. The 119-residue stretch at 32 to 150 (YIRFCYQPFK…CGLKHVFMCK (119 aa)) folds into the C-type lectin domain.

It belongs to the snaclec family. In terms of assembly, heterodimer of subunits alpha and beta; disulfide-linked. As to expression, expressed by the venom gland.

Its subcellular location is the secreted. In terms of biological role, is a potent glycoprotein Ibalpha (GP1BA) antagonist. Concentration-dependently inhibits botrocetin-, ristocetin- and low dose thrombin-induced platelet aggregation. Inhibits platelet adhesion only through inhibiting the vWF interaction with GP1BA, but has minimal effect on other platelet receptors, such as alpha-IIb/beta-3 (ITGA2B/ITGB3) or alpha-2/beta-1 (ITGA2/ITGB1). Causes an instant severe thrombocytopenia in rats and is not lethal to mice. This chain is Snaclec agkicetin-C subunit alpha, found in Deinagkistrodon acutus (Hundred-pace snake).